We begin with the raw amino-acid sequence, 495 residues long: UDP-N-acetylmuramoyl-L-alanyl-D-glutamate--2,6-diaminopimelate ligase (495 aa).

Residue Ser-29 participates in UDP-N-acetyl-alpha-D-muramoyl-L-alanyl-D-glutamate binding. Residue 111–117 (GTNGKTS) coordinates ATP. Residues 153–154 (TT), Ser-180, Gln-186, and Arg-188 contribute to the UDP-N-acetyl-alpha-D-muramoyl-L-alanyl-D-glutamate site. Lys-220 is modified (N6-carboxylysine). Meso-2,6-diaminopimelate is bound by residues Arg-384, 408-411 (DNPR), Gly-459, and Glu-463. A Meso-diaminopimelate recognition motif motif is present at residues 408–411 (DNPR).

The protein belongs to the MurCDEF family. MurE subfamily. Requires Mg(2+) as cofactor. Carboxylation is probably crucial for Mg(2+) binding and, consequently, for the gamma-phosphate positioning of ATP.

It localises to the cytoplasm. It catalyses the reaction UDP-N-acetyl-alpha-D-muramoyl-L-alanyl-D-glutamate + meso-2,6-diaminopimelate + ATP = UDP-N-acetyl-alpha-D-muramoyl-L-alanyl-gamma-D-glutamyl-meso-2,6-diaminopimelate + ADP + phosphate + H(+). It participates in cell wall biogenesis; peptidoglycan biosynthesis. Functionally, catalyzes the addition of meso-diaminopimelic acid to the nucleotide precursor UDP-N-acetylmuramoyl-L-alanyl-D-glutamate (UMAG) in the biosynthesis of bacterial cell-wall peptidoglycan. This is UDP-N-acetylmuramoyl-L-alanyl-D-glutamate--2,6-diaminopimelate ligase from Xanthomonas oryzae pv. oryzae (strain MAFF 311018).